We begin with the raw amino-acid sequence, 272 residues long: Arylesterase (272 aa).

The 233-residue stretch at 21 to 253 folds into the AB hydrolase-1 domain; sequence KPVLFSHGWL…LKVYKDAPHG (233 aa). Residue tryptophan 29 coordinates acetate. The active site involves serine 95. An acetate-binding site is contributed by methionine 96. Residues aspartate 223 and histidine 252 contribute to the active site.

Belongs to the AB hydrolase superfamily. Bacterial non-heme haloperoxidase / perhydrolase family. Dimer of trimers.

The enzyme catalyses a phenyl acetate + H2O = a phenol + acetate + H(+). It catalyses the reaction peracetic acid + H2O = acetate + H2O2 + H(+). It carries out the reaction a percarboxylic acid + H2O = a carboxylate + H2O2 + H(+). Hydrolyzes phenolic esters, such as phenyl acetate, nitrophenyl acetate and naphtyl acetate. Can act on a wide range of esters, but reaction rate and enantioselectivity differ significantly depending on the substrate. Shows a preference for esters with small acyl groups. Also shows low perhydrolase activity, and catalyzes the reversible formation of peroxycarboxylic acids from carboxylic acids and hydrogen peroxide. In vitro, enzyme-generated peracetic acid oxidizes bromide ion to bromonium, which reacts with monochlorodimedone to form bromochlorodimedone. In Pseudomonas fluorescens, this protein is Arylesterase.